Consider the following 530-residue polypeptide: Autoinducer-2 kinase (530 aa).

Belongs to the FGGY kinase family.

It is found in the cytoplasm. The catalysed reaction is (S)-4,5-dihydroxypentane-2,3-dione + ATP = (2S)-2-hydroxy-3,4-dioxopentyl phosphate + ADP + H(+). Catalyzes the phosphorylation of autoinducer-2 (AI-2) to phospho-AI-2, which subsequently inactivates the transcriptional regulator LsrR and leads to the transcription of the lsr operon. Phosphorylates the ring-open form of (S)-4,5-dihydroxypentane-2,3-dione (DPD), which is the precursor to all AI-2 signaling molecules, at the C5 position. The chain is Autoinducer-2 kinase from Yersinia pseudotuberculosis serotype O:1b (strain IP 31758).